A 227-amino-acid chain; its full sequence is Cytidylate kinase (227 aa).

12–20 contacts ATP; sequence GPSGAGKGT.

It belongs to the cytidylate kinase family. Type 1 subfamily.

It is found in the cytoplasm. It carries out the reaction CMP + ATP = CDP + ADP. The catalysed reaction is dCMP + ATP = dCDP + ADP. In Erwinia tasmaniensis (strain DSM 17950 / CFBP 7177 / CIP 109463 / NCPPB 4357 / Et1/99), this protein is Cytidylate kinase.